The chain runs to 157 residues: 6,7-dimethyl-8-ribityllumazine synthase 1 (157 aa).

5-amino-6-(D-ribitylamino)uracil-binding positions include Phe-22, 53 to 55 (ALE), and 82 to 84 (TVI). Residue 87–88 (ET) coordinates (2S)-2-hydroxy-3-oxobutyl phosphate. His-90 (proton donor) is an active-site residue. Residue Asn-115 coordinates 5-amino-6-(D-ribitylamino)uracil. Arg-129 is a binding site for (2S)-2-hydroxy-3-oxobutyl phosphate.

The protein belongs to the DMRL synthase family. As to quaternary structure, homopentamer.

It carries out the reaction (2S)-2-hydroxy-3-oxobutyl phosphate + 5-amino-6-(D-ribitylamino)uracil = 6,7-dimethyl-8-(1-D-ribityl)lumazine + phosphate + 2 H2O + H(+). The protein operates within cofactor biosynthesis; riboflavin biosynthesis; riboflavin from 2-hydroxy-3-oxobutyl phosphate and 5-amino-6-(D-ribitylamino)uracil: step 1/2. Catalyzes the formation of 6,7-dimethyl-8-ribityllumazine by condensation of 5-amino-6-(D-ribitylamino)uracil with 3,4-dihydroxy-2-butanone 4-phosphate. This is the penultimate step in the biosynthesis of riboflavin. In Brucella melitensis biotype 1 (strain ATCC 23456 / CCUG 17765 / NCTC 10094 / 16M), this protein is 6,7-dimethyl-8-ribityllumazine synthase 1 (ribH1).